The primary structure comprises 179 residues: Large ribosomal subunit protein uL5 (179 aa).

This sequence belongs to the universal ribosomal protein uL5 family. As to quaternary structure, part of the 50S ribosomal subunit; part of the 5S rRNA/L5/L18/L25 subcomplex. Contacts the 5S rRNA and the P site tRNA. Forms a bridge to the 30S subunit in the 70S ribosome.

This is one of the proteins that bind and probably mediate the attachment of the 5S RNA into the large ribosomal subunit, where it forms part of the central protuberance. In the 70S ribosome it contacts protein S13 of the 30S subunit (bridge B1b), connecting the 2 subunits; this bridge is implicated in subunit movement. Contacts the P site tRNA; the 5S rRNA and some of its associated proteins might help stabilize positioning of ribosome-bound tRNAs. This chain is Large ribosomal subunit protein uL5, found in Azotobacter vinelandii (strain DJ / ATCC BAA-1303).